The primary structure comprises 269 residues: Dermonecrotic toxin SpeSicTox-betaIB3 (269 aa).

His5 is a catalytic residue. Mg(2+)-binding residues include Glu25 and Asp27. The active-site Nucleophile is His41. Cystine bridges form between Cys45–Cys51 and Cys47–Cys191. A Mg(2+)-binding site is contributed by Asp85.

Belongs to the arthropod phospholipase D family. Class II subfamily. Mg(2+) serves as cofactor. Expressed by the venom gland.

Its subcellular location is the secreted. The catalysed reaction is an N-(acyl)-sphingosylphosphocholine = an N-(acyl)-sphingosyl-1,3-cyclic phosphate + choline. The enzyme catalyses an N-(acyl)-sphingosylphosphoethanolamine = an N-(acyl)-sphingosyl-1,3-cyclic phosphate + ethanolamine. It catalyses the reaction a 1-acyl-sn-glycero-3-phosphocholine = a 1-acyl-sn-glycero-2,3-cyclic phosphate + choline. It carries out the reaction a 1-acyl-sn-glycero-3-phosphoethanolamine = a 1-acyl-sn-glycero-2,3-cyclic phosphate + ethanolamine. Its function is as follows. Dermonecrotic toxins cleave the phosphodiester linkage between the phosphate and headgroup of certain phospholipids (sphingolipid and lysolipid substrates), forming an alcohol (often choline) and a cyclic phosphate. This toxin acts on sphingomyelin (SM). It may also act on ceramide phosphoethanolamine (CPE), lysophosphatidylcholine (LPC) and lysophosphatidylethanolamine (LPE), but not on lysophosphatidylserine (LPS), and lysophosphatidylglycerol (LPG). It acts by transphosphatidylation, releasing exclusively cyclic phosphate products as second products. Induces dermonecrosis, hemolysis, increased vascular permeability, edema, inflammatory response, and platelet aggregation. The protein is Dermonecrotic toxin SpeSicTox-betaIB3 of Sicarius peruensis (Six-eyed sand spider).